The chain runs to 317 residues: MANNMTDTMTKFDTNNDSASLQQNGNKAGQSWFERPIPGIKQQLIAQLTAVETEPSTKCSSCHSVITNTALIFNCYVCPHCDHHLPMSARERLNWLLDQVEGELGQEFTAKDPLKFVDSKPYPDRMAEAQDKTKESEALIVLYGKLRNLDIVTCAFDFRFMGGSMGSVVGDRFVQAAEKALADKVPLVCFAASGGARMQEGLLSLMQMARTAAAIERLRIAGIPYVVVLTNPVYGGVTASLAMLGDIHLAEPKAMIGFAGKRVIEQTVRETLEEPFQRAEFLLKHGVVDEVVHRHQMIDTIYRLLAKLCSVPNVDAQ.

The tract at residues 1–28 (MANNMTDTMTKFDTNNDSASLQQNGNKA) is disordered. A CoA carboxyltransferase N-terminal domain is found at 55–317 (PSTKCSSCHS…LCSVPNVDAQ (263 aa)). Zn(2+) contacts are provided by Cys-59, Cys-62, Cys-78, and Cys-81. The C4-type zinc finger occupies 59–81 (CSSCHSVITNTALIFNCYVCPHC).

Belongs to the AccD/PCCB family. As to quaternary structure, acetyl-CoA carboxylase is a heterohexamer composed of biotin carboxyl carrier protein (AccB), biotin carboxylase (AccC) and two subunits each of ACCase subunit alpha (AccA) and ACCase subunit beta (AccD). Zn(2+) serves as cofactor.

It is found in the cytoplasm. The catalysed reaction is N(6)-carboxybiotinyl-L-lysyl-[protein] + acetyl-CoA = N(6)-biotinyl-L-lysyl-[protein] + malonyl-CoA. Its pathway is lipid metabolism; malonyl-CoA biosynthesis; malonyl-CoA from acetyl-CoA: step 1/1. Functionally, component of the acetyl coenzyme A carboxylase (ACC) complex. Biotin carboxylase (BC) catalyzes the carboxylation of biotin on its carrier protein (BCCP) and then the CO(2) group is transferred by the transcarboxylase to acetyl-CoA to form malonyl-CoA. The chain is Acetyl-coenzyme A carboxylase carboxyl transferase subunit beta from Psychrobacter arcticus (strain DSM 17307 / VKM B-2377 / 273-4).